A 485-amino-acid chain; its full sequence is Programmed cell death protein 7 (485 aa).

Residues Met1–Leu133 form a disordered region. Residues Pro12–Phe48 show a composition bias toward pro residues. The segment covering Pro49 to Ser71 has biased composition (low complexity). Pro residues-rich tracts occupy residues Pro82–Arg96 and Pro109–Ala130. Coiled coils occupy residues Val232–Arg335 and Arg362–Leu411.

In terms of assembly, interacts with RBM40. Component of the U11/U12 snRNPs that are part of the U12-type spliceosome.

It localises to the nucleus. Functionally, promotes apoptosis when overexpressed. This is Programmed cell death protein 7 (PDCD7) from Homo sapiens (Human).